The sequence spans 217 residues: Probable disulfide bond formation protein D (217 aa).

Positions 1–28 (MKSSNKLMALGIVFSIAVLIVIGTIVYS) are cleaved as a signal peptide. The cysteines at positions 66 and 69 are disulfide-linked.

This sequence belongs to the thioredoxin family. DsbA subfamily.

Functionally, may be required for disulfide bond formation in some proteins. The chain is Probable disulfide bond formation protein D (bdbD) from Bacillus anthracis.